The chain runs to 797 residues: Outer membrane protein assembly factor BamA (797 aa).

The N-terminal stretch at 1–19 is a signal peptide; sequence MKKLLIASLLFGTTTTVFA. 5 POTRA domains span residues 22–89, 90–170, 173–259, 262–341, and 344–418; these read FVAK…VVAK, SIIS…INED, AKLA…VNEG, YDLR…VDAG, and LTVR…VKER.

It belongs to the BamA family. Part of the Bam complex.

The protein resides in the cell outer membrane. In terms of biological role, part of the outer membrane protein assembly complex, which is involved in assembly and insertion of beta-barrel proteins into the outer membrane. This is Outer membrane protein assembly factor BamA from Haemophilus influenzae.